We begin with the raw amino-acid sequence, 1438 residues long: Pyochelin synthetase PchE (1438 aa).

A Carrier 1 domain is found at 6–85 (DSRTALRDWL…AWLDLLACAD (80 aa)). O-(pantetheine 4'-phosphoryl)serine is present on serine 46. The condensation/cyclization stretch occupies residues 136-442 (RTRDVDPQRL…ARRQGQPRSA (307 aa)). The adenylation stretch occupies residues 563–950 (RAAEAPDADA…GRVDQQVKVR (388 aa)). A Carrier 2 domain is found at 1350 to 1425 (EPLEAHEQAL…GLARHLQAQT (76 aa)). O-(pantetheine 4'-phosphoryl)serine is present on serine 1385.

Belongs to the NRP synthetase family. It depends on pantetheine 4'-phosphate as a cofactor.

It carries out the reaction holo-[peptidyl-carrier protein] + L-cysteine + ATP = L-cysteinyl-[peptidyl-carrier protein] + AMP + diphosphate. Its pathway is siderophore biosynthesis. It functions in the pathway antifungal biosynthesis. In terms of biological role, involved in the biosynthesis of the siderophore pyochelin. Accepts salicylate activated by PchD at the first peptidyl carrier domain (ArCP), and activates and fixes one molecule of cysteine at the second peptidyl carrier domain (PCP1) via a thioester linkage to the phosphopanthetheine moiety. Then catalyzes the condensation reaction between the salicylate bound to the first site and the cysteine bound to the second site, and the cyclization of the cysteine to form the salicyl-thiazolinyl-S-PCP1 intermediate at the second site. When this intermediate is released by the action of a thioesterase, it produces the antifungal antibiotic dihydroaeruginoic acid (Dha or hydroxyphenyl-thiazolinyl-carboxylate). In Pseudomonas aeruginosa (strain UCBPP-PA14), this protein is Pyochelin synthetase PchE.